The sequence spans 614 residues: Chaperone protein DnaK (614 aa).

Thr-174 carries the post-translational modification Phosphothreonine; by autocatalysis. The segment at 576–614 (QTGGAAPGPDMGADPGAGGAQGDDNVVDAEYTEVDKDQK) is disordered. Low complexity predominate over residues 578 to 589 (GGAAPGPDMGAD).

This sequence belongs to the heat shock protein 70 family.

In terms of biological role, acts as a chaperone. The polypeptide is Chaperone protein DnaK (Desulfitobacterium hafniense (strain DSM 10664 / DCB-2)).